Here is a 261-residue protein sequence, read N- to C-terminus: Imidazole glycerol phosphate synthase subunit HisF (261 aa).

Catalysis depends on residues Asp11 and Asp130.

This sequence belongs to the HisA/HisF family. In terms of assembly, heterodimer of HisH and HisF.

The protein localises to the cytoplasm. The enzyme catalyses 5-[(5-phospho-1-deoxy-D-ribulos-1-ylimino)methylamino]-1-(5-phospho-beta-D-ribosyl)imidazole-4-carboxamide + L-glutamine = D-erythro-1-(imidazol-4-yl)glycerol 3-phosphate + 5-amino-1-(5-phospho-beta-D-ribosyl)imidazole-4-carboxamide + L-glutamate + H(+). It functions in the pathway amino-acid biosynthesis; L-histidine biosynthesis; L-histidine from 5-phospho-alpha-D-ribose 1-diphosphate: step 5/9. In terms of biological role, IGPS catalyzes the conversion of PRFAR and glutamine to IGP, AICAR and glutamate. The HisF subunit catalyzes the cyclization activity that produces IGP and AICAR from PRFAR using the ammonia provided by the HisH subunit. This chain is Imidazole glycerol phosphate synthase subunit HisF, found in Heliobacterium modesticaldum (strain ATCC 51547 / Ice1).